We begin with the raw amino-acid sequence, 834 residues long: ATP-dependent DNA helicase fml1 (834 aa).

One can recognise a Helicase ATP-binding domain in the interval I80–R248. L93–T100 is a binding site for ATP. The short motif at D196 to H199 is the DEAH box element. Residues H416 to R582 form the Helicase C-terminal domain. Positions E650 to Q690 are interaction with MHF complex. A disordered region spans residues N738 to Q769. The span at T740–Q754 shows a compositional bias: basic and acidic residues.

The protein belongs to the DEAD box helicase family. DEAH subfamily. FANCM sub-subfamily.

It is found in the cytoplasm. Its subcellular location is the nucleus. The protein localises to the nucleolus. The catalysed reaction is ATP + H2O = ADP + phosphate + H(+). Functionally, ATP-dependent DNA helicase involved in DNA damage repair by homologous recombination and in genome maintenance. Capable of unwinding D-loops. Plays a role in limiting crossover recombination during mitotic DNA double-strand break (DSB) repair. Component of a FANCM-MHF complex which promotes gene conversion at blocked replication forks, probably by reversal of the stalled fork. FANCM-MHF also promotes non-crossover recombination in meiotic cells. This Schizosaccharomyces pombe (strain 972 / ATCC 24843) (Fission yeast) protein is ATP-dependent DNA helicase fml1.